The following is a 516-amino-acid chain: GMP synthase [glutamine-hydrolyzing] (516 aa).

Residues 8–198 (KILILDFGSQ…VVNICGCDTL (191 aa)) form the Glutamine amidotransferase type-1 domain. The active-site Nucleophile is the cysteine 84. Residues histidine 172 and glutamate 174 contribute to the active site. The region spanning 199–391 (WNIENIIEND…LGLPYNMLYR (193 aa)) is the GMPS ATP-PPase domain. Residue 226 to 232 (SGGVDSS) coordinates ATP.

Homodimer.

The enzyme catalyses XMP + L-glutamine + ATP + H2O = GMP + L-glutamate + AMP + diphosphate + 2 H(+). Its pathway is purine metabolism; GMP biosynthesis; GMP from XMP (L-Gln route): step 1/1. Functionally, catalyzes the synthesis of GMP from XMP. This chain is GMP synthase [glutamine-hydrolyzing], found in Francisella tularensis subsp. tularensis (strain FSC 198).